We begin with the raw amino-acid sequence, 86 residues long: Large ribosomal subunit protein bL27 (86 aa).

The segment at 1-23 is disordered; that stretch reads MAHKKGTGSTRNGRDSNSKRLGV.

Belongs to the bacterial ribosomal protein bL27 family.

The polypeptide is Large ribosomal subunit protein bL27 (Prochlorococcus marinus (strain MIT 9515)).